The sequence spans 66 residues: UPF0434 protein M446_0487 (66 aa).

It belongs to the UPF0434 family.

This Methylobacterium sp. (strain 4-46) protein is UPF0434 protein M446_0487.